The primary structure comprises 132 residues: D-ribose pyranase (132 aa).

Histidine 20 functions as the Proton donor in the catalytic mechanism. Residues aspartate 28, histidine 99, and 121–123 each bind substrate; that span reads YSN.

The protein belongs to the RbsD / FucU family. RbsD subfamily. As to quaternary structure, homodecamer.

It localises to the cytoplasm. The enzyme catalyses beta-D-ribopyranose = beta-D-ribofuranose. Its pathway is carbohydrate metabolism; D-ribose degradation; D-ribose 5-phosphate from beta-D-ribopyranose: step 1/2. In terms of biological role, catalyzes the interconversion of beta-pyran and beta-furan forms of D-ribose. The sequence is that of D-ribose pyranase from Lactococcus lactis subsp. cremoris (strain MG1363).